A 175-amino-acid polypeptide reads, in one-letter code: Cytidylate kinase (175 aa).

Position 7–15 (7–15) interacts with ATP; it reads GLPGSGTTT.

Belongs to the cytidylate kinase family. Type 2 subfamily.

The protein resides in the cytoplasm. It carries out the reaction CMP + ATP = CDP + ADP. The enzyme catalyses dCMP + ATP = dCDP + ADP. The protein is Cytidylate kinase of Methanococcoides burtonii (strain DSM 6242 / NBRC 107633 / OCM 468 / ACE-M).